Here is a 306-residue protein sequence, read N- to C-terminus: 4-diphosphocytidyl-2-C-methyl-D-erythritol kinase (306 aa).

Residue Lys11 is part of the active site. 113–123 (PPEGGIGGGSS) provides a ligand contact to ATP. Residue Asp153 is part of the active site.

Belongs to the GHMP kinase family. IspE subfamily.

The enzyme catalyses 4-CDP-2-C-methyl-D-erythritol + ATP = 4-CDP-2-C-methyl-D-erythritol 2-phosphate + ADP + H(+). It participates in isoprenoid biosynthesis; isopentenyl diphosphate biosynthesis via DXP pathway; isopentenyl diphosphate from 1-deoxy-D-xylulose 5-phosphate: step 3/6. In terms of biological role, catalyzes the phosphorylation of the position 2 hydroxy group of 4-diphosphocytidyl-2C-methyl-D-erythritol. The chain is 4-diphosphocytidyl-2-C-methyl-D-erythritol kinase from Leptospira biflexa serovar Patoc (strain Patoc 1 / ATCC 23582 / Paris).